The sequence spans 505 residues: Cytochrome P450 2K6 (505 aa).

The chain crosses the membrane as a helical span at residues 7–27 (FLLQGSPTGTILGALLLFLVI). C448 contributes to the heme binding site.

This sequence belongs to the cytochrome P450 family. Requires heme as cofactor. In terms of tissue distribution, detected in liver and ovary.

Its subcellular location is the endoplasmic reticulum membrane. It localises to the microsome membrane. Functionally, metabolizes aflatoxin B1 (AFB1) to the cytotoxic derivative AFB1 exo-8,9-epoxide. Does not show activity towards lauric acid. This chain is Cytochrome P450 2K6, found in Danio rerio (Zebrafish).